The chain runs to 192 residues: Probable nicotinate-nucleotide adenylyltransferase (192 aa).

The protein belongs to the NadD family.

It carries out the reaction nicotinate beta-D-ribonucleotide + ATP + H(+) = deamido-NAD(+) + diphosphate. It functions in the pathway cofactor biosynthesis; NAD(+) biosynthesis; deamido-NAD(+) from nicotinate D-ribonucleotide: step 1/1. In terms of biological role, catalyzes the reversible adenylation of nicotinate mononucleotide (NaMN) to nicotinic acid adenine dinucleotide (NaAD). In Rhizobium etli (strain ATCC 51251 / DSM 11541 / JCM 21823 / NBRC 15573 / CFN 42), this protein is Probable nicotinate-nucleotide adenylyltransferase.